Reading from the N-terminus, the 281-residue chain is MNSNIEKSDKPSFIKISEQPSLYDDLEKKSVREILEDINKEDQKVAIAVQKAIPQIEKLVTQIVPRMKQGGRIFYMGAGTSGRLGVLDASEIPPTFGMPPTLIIGLIAGGDTALRNPVENAEDNTTRGWEELTEHNINDKDTVIGIAASGTTPYVIGAMHAAREHGILTGCITSNPNSPMAAEADIPIEMIVGPEYVTGSSRMKSGTGQKMILNMITTSVMIQLGRVKGNKMVNMQLSNRKLVDRGTRMIIEELGLEYDKAKALLLMHGSVKKAIDAYKAG.

An SIS domain is found at 63–226; that stretch reads IVPRMKQGGR…TTSVMIQLGR (164 aa). E91 functions as the Proton donor in the catalytic mechanism. E122 is an active-site residue.

This sequence belongs to the GCKR-like family. MurNAc-6-P etherase subfamily. Homodimer.

The catalysed reaction is N-acetyl-D-muramate 6-phosphate + H2O = N-acetyl-D-glucosamine 6-phosphate + (R)-lactate. The protein operates within amino-sugar metabolism; N-acetylmuramate degradation. Its function is as follows. Specifically catalyzes the cleavage of the D-lactyl ether substituent of MurNAc 6-phosphate, producing GlcNAc 6-phosphate and D-lactate. The sequence is that of N-acetylmuramic acid 6-phosphate etherase from Bacteroides fragilis (strain ATCC 25285 / DSM 2151 / CCUG 4856 / JCM 11019 / LMG 10263 / NCTC 9343 / Onslow / VPI 2553 / EN-2).